An 83-amino-acid polypeptide reads, in one-letter code: Small ribosomal subunit protein bS20 (83 aa).

It belongs to the bacterial ribosomal protein bS20 family.

Binds directly to 16S ribosomal RNA. This is Small ribosomal subunit protein bS20 from Flavobacterium johnsoniae (strain ATCC 17061 / DSM 2064 / JCM 8514 / BCRC 14874 / CCUG 350202 / NBRC 14942 / NCIMB 11054 / UW101) (Cytophaga johnsonae).